The primary structure comprises 40 residues: Photosystem II reaction center protein J (40 aa).

Residues 8 to 28 (IPLWLIGTVTGIIVIGLLGVF) form a helical membrane-spanning segment.

This sequence belongs to the PsbJ family. In terms of assembly, PSII is composed of 1 copy each of membrane proteins PsbA, PsbB, PsbC, PsbD, PsbE, PsbF, PsbH, PsbI, PsbJ, PsbK, PsbL, PsbM, PsbT, PsbX, PsbY, PsbZ, Psb30/Ycf12, at least 3 peripheral proteins of the oxygen-evolving complex and a large number of cofactors. It forms dimeric complexes.

It is found in the plastid. The protein localises to the chloroplast thylakoid membrane. Functionally, one of the components of the core complex of photosystem II (PSII). PSII is a light-driven water:plastoquinone oxidoreductase that uses light energy to abstract electrons from H(2)O, generating O(2) and a proton gradient subsequently used for ATP formation. It consists of a core antenna complex that captures photons, and an electron transfer chain that converts photonic excitation into a charge separation. This chain is Photosystem II reaction center protein J, found in Pinus thunbergii (Japanese black pine).